A 59-amino-acid polypeptide reads, in one-letter code: MFAGLPSLTHEQQQKAVERIQELMSQGMSSGQAIALVAEELRANHSGERIVARFEDEDE.

This sequence belongs to the UPF0181 family.

In Escherichia coli O127:H6 (strain E2348/69 / EPEC), this protein is UPF0181 protein YoaH.